Here is a 478-residue protein sequence, read N- to C-terminus: MSAATAAAAASGIQSTAGAIPMRNEKGELSMQKVKVQRYISGKRPDYARADSSSEESDDDDFIDTRKRLERHKAERHKLELSRQGGSAEGEERAAGEGQEEDDAEVDDPRLRRLRQRPVDMEDMERERRERHRHIHEPEIMESDSEDEEEDEGAQGAIQRGTNKITLASESDTDAELSDTELENRRTKLRSRMLQQQREEEVLQKEDEKQSESSESESSEYEEETESEEDNEPRLKPLFVRKRDRATIQEKEREAQKQKQLEAEAKRAAKERRRATLRMVEESVKKDLEKTKPETNEACIEDVCTDDENDEVEYEAWKLRELKRMKRDREERDNVEREKLDIDRMRNMTEEERRQELRQNPKVVTNKATKGKYKFLQKYYHRGAFYLDEENDVLKRDFAQATLEDHFDKTILPKVMQVKNFGRCGRTKYTHLVDQDTTKFDSPWYAESSSNIKFHNEHAGGMRQQFDKPTGSKRKKME.

Residues 1–20 (MSAATAAAAASGIQSTAGAI) are compositionally biased toward low complexity. Disordered stretches follow at residues 1 to 276 (MSAA…RRAT) and 456 to 478 (NEHA…KKME). Over residues 53–62 (SSEESDDDDF) the composition is skewed to acidic residues. Positions 107 to 128 (DDPRLRRLRQRPVDMEDMERER) are enriched in basic and acidic residues. The span at 140-153 (IMESDSEDEEEDEG) shows a compositional bias: acidic residues. Residues 160–170 (RGTNKITLASE) are compositionally biased toward polar residues. Residues 171 to 181 (SDTDAELSDTE) are compositionally biased toward acidic residues. A compositionally biased stretch (basic and acidic residues) spans 197–212 (QREEEVLQKEDEKQSE). Residues 214–231 (SESESSEYEEETESEEDN) show a composition bias toward acidic residues. An interaction with Prp38 region spans residues 229-478 (EDNEPRLKPL…PTGSKRKKME (250 aa)). The segment covering 245-268 (RATIQEKEREAQKQKQLEAEAKRA) has biased composition (basic and acidic residues).

It belongs to the MFAP1 family. As to quaternary structure, component of the spliceosome B complex. Interacts (via C-terminus) with Prp38.

The protein localises to the nucleus. In terms of biological role, required for pre-mRNA splicing. The sequence is that of Microfibrillar-associated protein 1 from Drosophila melanogaster (Fruit fly).